The sequence spans 204 residues: bMERB domain-containing protein 1 (204 aa).

Positions 3-150 (LKQSLSTHLE…EQEEDKEMAD (148 aa)) constitute a bMERB domain. The interval 162-187 (VTKSPASSRAEKKAEPPPSKPTVAKT) is disordered.

This chain is bMERB domain-containing protein 1 (BMERB1), found in Pongo abelii (Sumatran orangutan).